We begin with the raw amino-acid sequence, 446 residues long: tRNA-2-methylthio-N(6)-dimethylallyladenosine synthase (446 aa).

Residues 8–124 (KTYRVKSFGC…LPGMIDAAVA (117 aa)) form the MTTase N-terminal domain. 6 residues coordinate [4Fe-4S] cluster: cysteine 17, cysteine 53, cysteine 87, cysteine 160, cysteine 164, and cysteine 167. The Radical SAM core domain occupies 146 to 378 (RKSAPSAFLT…QAALNRDQAA (233 aa)). In terms of domain architecture, TRAM spans 381-442 (AGSVGRTCEV…PNSLAGQLLE (62 aa)).

This sequence belongs to the methylthiotransferase family. MiaB subfamily. As to quaternary structure, monomer. [4Fe-4S] cluster is required as a cofactor.

It localises to the cytoplasm. It catalyses the reaction N(6)-dimethylallyladenosine(37) in tRNA + (sulfur carrier)-SH + AH2 + 2 S-adenosyl-L-methionine = 2-methylsulfanyl-N(6)-dimethylallyladenosine(37) in tRNA + (sulfur carrier)-H + 5'-deoxyadenosine + L-methionine + A + S-adenosyl-L-homocysteine + 2 H(+). Its function is as follows. Catalyzes the methylthiolation of N6-(dimethylallyl)adenosine (i(6)A), leading to the formation of 2-methylthio-N6-(dimethylallyl)adenosine (ms(2)i(6)A) at position 37 in tRNAs that read codons beginning with uridine. The polypeptide is tRNA-2-methylthio-N(6)-dimethylallyladenosine synthase (Erythrobacter litoralis (strain HTCC2594)).